The following is a 357-amino-acid chain: MDEADEGRSLRRGWTTGACATAALKAALEALVDRPFPDPVALTLPRGERPAFALATRETGPGWARAGVIKDAGDDPDVTHGALIEATARLLPKGSGLIFRAGSGVGTVTKPGLPLAVGEPAINPVPRAMMTEVATAAGLADLEISIAVAQGASIALRTWNPRLGILGGLSILGTTGVVVPYSCSAWIHSIRRGVDVARATGRAHVVGTTGATSERAALDHLGLDAEAVIDMGDFVGGLLKYLRDHPIPHLTIAGGFAKLSKLADGALDLHSKRAQVDIPALARRLAALGATQAVVSEAERANTALEVLTLAQAAGLPLATAIAFEAATVARAVLGEAPVRVSVLVVDRGGRVVGEGG.

This sequence belongs to the CbiD family.

The enzyme catalyses Co-precorrin-5B + S-adenosyl-L-methionine = Co-precorrin-6A + S-adenosyl-L-homocysteine. The protein operates within cofactor biosynthesis; adenosylcobalamin biosynthesis; cob(II)yrinate a,c-diamide from sirohydrochlorin (anaerobic route): step 6/10. In terms of biological role, catalyzes the methylation of C-1 in cobalt-precorrin-5B to form cobalt-precorrin-6A. The polypeptide is Cobalt-precorrin-5B C(1)-methyltransferase (Rhodospirillum rubrum (strain ATCC 11170 / ATH 1.1.1 / DSM 467 / LMG 4362 / NCIMB 8255 / S1)).